The following is a 217-amino-acid chain: 3-demethoxyubiquinol 3-hydroxylase (217 aa).

Fe cation contacts are provided by E66, E96, H99, E148, E180, and H183.

It belongs to the COQ7 family. Requires Fe cation as cofactor.

Its subcellular location is the cell membrane. The catalysed reaction is a 5-methoxy-2-methyl-3-(all-trans-polyprenyl)benzene-1,4-diol + AH2 + O2 = a 3-demethylubiquinol + A + H2O. The protein operates within cofactor biosynthesis; ubiquinone biosynthesis. Functionally, catalyzes the hydroxylation of 2-nonaprenyl-3-methyl-6-methoxy-1,4-benzoquinol during ubiquinone biosynthesis. The protein is 3-demethoxyubiquinol 3-hydroxylase of Xylella fastidiosa (strain Temecula1 / ATCC 700964).